The chain runs to 150 residues: Histone H3-like centromeric protein A (150 aa).

The interval 1-55 (MRPGSTPPSRRKSRPPRRVSPPLPTTSRTSPRRPHAQQQRRASRASPKKRFRPGT) is disordered. Basic residues predominate over residues 41–53 (RASRASPKKRFRP). The H3-like stretch occupies residues 53–150 (PGTRALMEIR…RIRGVNEGLG (98 aa)).

Belongs to the histone H3 family. As to quaternary structure, component of centromeric nucleosomes, where DNA is wrapped around a histone octamer core. The octamer contains two molecules each of H2A, H2B, CENPA and H4 assembled in one CENPA-H4 heterotetramer and two H2A-H2B heterodimers. CENPA modulates the DNA-binding characteristics of nucleosomes so that protruding DNA ends have higher flexibility than in nucleosomes containing conventional histone H3.

The protein resides in the nucleus. It localises to the chromosome. Its subcellular location is the centromere. Its function is as follows. Histone H3-like nucleosomal protein that is specifically found in centromeric nucleosomes. Replaces conventional H3 in the nucleosome core of centromeric chromatin that serves as an assembly site for the inner kinetochore. The presence of CENPA subtly modifies the nucleosome structure and the way DNA is wrapped around the nucleosome and gives rise to protruding DNA ends that are less well-ordered and rigid compared to nucleosomes containing histone H3. May serve as an epigenetic mark that propagates centromere identity through replication and cell division. Required for recruitment and assembly of kinetochore proteins, and as a consequence required for progress through mitosis, chromosome segregation and cytokinesis. This is Histone H3-like centromeric protein A (cenpa) from Xenopus laevis (African clawed frog).